The primary structure comprises 158 residues: Low molecular weight phosphotyrosine protein phosphatase (158 aa).

N-acetylalanine is present on alanine 2. Cysteine 13 serves as the catalytic Nucleophile. Arginine 19 is an active-site residue. Residue aspartate 130 is the Proton donor of the active site. A phosphotyrosine mark is found at tyrosine 132 and tyrosine 133.

Belongs to the low molecular weight phosphotyrosine protein phosphatase family. In terms of assembly, interacts with EPHA2; dephosphorylates EPHA2. Interacts with EPHB1. Interacts with the SH3 domain of SPTAN1. There is no interaction observed for isoform 2. Post-translationally, phosphorylated by LCK. Phosphorylation at Tyr-132 increases its phosphatase activity.

The protein localises to the cytoplasm. It catalyses the reaction O-phospho-L-tyrosyl-[protein] + H2O = L-tyrosyl-[protein] + phosphate. The enzyme catalyses a phosphate monoester + H2O = an alcohol + phosphate. Its activity is regulated as follows. Inhibited by sulfhydryl reagents. Its function is as follows. Acts on tyrosine phosphorylated proteins, low-MW aryl phosphates and natural and synthetic acyl phosphates with differences in substrate specificity between isoform 1 and isoform 2. This Rattus norvegicus (Rat) protein is Low molecular weight phosphotyrosine protein phosphatase.